A 740-amino-acid chain; its full sequence is Arf-GAP with coiled-coil, ANK repeat and PH domain-containing protein 1 (740 aa).

One can recognise a BAR domain in the interval 1 to 226 (MTVKLDFEEC…RKELGAQLHQ (226 aa)). The interval 1–382 (MTVKLDFEEC…RGPGQGSGHL (382 aa)) is required for formation of endosomal tubules when overexpressed with PIP5K1C. A PH domain is found at 265–360 (GLVMEGHLFK…WVSAVQSSIA (96 aa)). One can recognise an Arf-GAP domain in the interval 405 to 527 (GHVVAQVQSV…KFLTKLPEIR (123 aa)). The segment at 405 to 740 (GHVVAQVQSV…SRRSHDLHTL (336 aa)) is required for interaction with GULP1. The C4-type zinc finger occupies 420 to 443 (CCDCREPAPEWASINLGVTLCIQC). Residue Tyr485 is modified to 3'-nitrotyrosine. The tract at residues 525–566 (EIRGRRGGRGRPRGQPPVPPKPSIRPRPGSLRSKPEPPSEDL) is prevents interaction with ITGB1 when S-554 is not phosphorylated. Positions 525 to 581 (EIRGRRGGRGRPRGQPPVPPKPSIRPRPGSLRSKPEPPSEDLGSLHPGALLFRASGH) are disordered. The segment covering 538–549 (GQPPVPPKPSIR) has biased composition (pro residues). Residue Ser554 is modified to Phosphoserine; by PKB. ANK repeat units follow at residues 606–635 (DNATPLIQATAANSLLACEFLLQNGANVNQ), 639–668 (AGRGPLHHATILGHTGLACLFLKRGADLGA), and 672–702 (EGRDPLTIAMETANADIVTLLRLAKMREAEA).

In terms of assembly, banana-shaped homodimer laterally assembling into tetramers, the tetramers further pack helically onto the membrane. Interacts with GTP-bound ARF6. Interacts with third cytoplasmic loop of SLC2A4/GLUT4. Interacts with CLTC. Interacts with GULP1. Forms a complex with GDP-bound ARF6 and GULP1. Interacts with ITGB1; required for ITGB1 recycling. Post-translationally, phosphorylation at Ser-554 by PKB is required for interaction with ITGB1, export of ITGB1 from recycling endosomes to the cell surface and ITGB1-dependent cell migration. In terms of tissue distribution, highest level in lung and spleen. Low level in heart, kidney, liver and pancreas.

It is found in the recycling endosome membrane. With respect to regulation, GAP activity stimulated by phosphatidylinositol 4,5-bisphosphate (PIP2) and phosphatidic acid. GTPase-activating protein (GAP) for ADP ribosylation factor 6 (ARF6) required for clathrin-dependent export of proteins from recycling endosomes to trans-Golgi network and cell surface. Required for regulated export of ITGB1 from recycling endosomes to the cell surface and ITGB1-dependent cell migration. This is Arf-GAP with coiled-coil, ANK repeat and PH domain-containing protein 1 (ACAP1) from Homo sapiens (Human).